A 506-amino-acid chain; its full sequence is ATP synthase subunit alpha (506 aa).

Residues 119 to 129 (GPIEYEGKRPI) show a composition bias toward basic and acidic residues. The tract at residues 119 to 138 (GPIEYEGKRPIESPAPPIVR) is disordered. 169 to 176 (GDRQTGKT) lines the ATP pocket.

The protein belongs to the ATPase alpha/beta chains family. In terms of assembly, F-type ATPases have 2 components, CF(1) - the catalytic core - and CF(0) - the membrane proton channel. CF(1) has five subunits: alpha(3), beta(3), gamma(1), delta(1), epsilon(1). CF(0) has three main subunits: a(1), b(2) and c(9-12). The alpha and beta chains form an alternating ring which encloses part of the gamma chain. CF(1) is attached to CF(0) by a central stalk formed by the gamma and epsilon chains, while a peripheral stalk is formed by the delta and b chains.

The protein localises to the cell membrane. It catalyses the reaction ATP + H2O + 4 H(+)(in) = ADP + phosphate + 5 H(+)(out). Produces ATP from ADP in the presence of a proton gradient across the membrane. The alpha chain is a regulatory subunit. The polypeptide is ATP synthase subunit alpha (Caldanaerobacter subterraneus subsp. tengcongensis (strain DSM 15242 / JCM 11007 / NBRC 100824 / MB4) (Thermoanaerobacter tengcongensis)).